A 203-amino-acid polypeptide reads, in one-letter code: MKILVTAFDPFGGENINPSYEVLKNLKDNIEGAEIIKIQVPTVFYLSVEKVIEKIKEVKPDAVLSIGQAGGRYDITVERIAINIDDARIPDNIGQQPIDTPIDPEGAPAYFATIPIKEIVEEIKKENIPASISNTAGTFVCNHLMYGILNYVHKNGLNIKAGFIHIPYLPVQVLNKPYTPSMSLGDMVKAIETAIKVIAKKSR.

Active-site residues include glutamate 78, cysteine 141, and histidine 165.

This sequence belongs to the peptidase C15 family. In terms of assembly, homotetramer.

It is found in the cytoplasm. It carries out the reaction Release of an N-terminal pyroglutamyl group from a polypeptide, the second amino acid generally not being Pro.. Functionally, removes 5-oxoproline from various penultimate amino acid residues except L-proline. This Thermoanaerobacter pseudethanolicus (strain ATCC 33223 / 39E) (Clostridium thermohydrosulfuricum) protein is Pyrrolidone-carboxylate peptidase.